A 181-amino-acid chain; its full sequence is Large ribosomal subunit protein eL18 (181 aa).

A disordered region spans residues 152-181 (WGKAPGQRGSHSAPYVRSEGRKFERAHGLK). Residues 169–181 (SEGRKFERAHGLK) are compositionally biased toward basic and acidic residues.

It belongs to the eukaryotic ribosomal protein eL18 family.

It localises to the cytoplasm. The chain is Large ribosomal subunit protein eL18 (RPL18) from Tetrahymena thermophila.